Reading from the N-terminus, the 154-residue chain is Myoglobin (154 aa).

Positions 2 to 148 (GLSDGEWQLV…FRNDIAAKYK (147 aa)) constitute a Globin domain. A Phosphoserine modification is found at S4. Residue H65 participates in nitrite binding. O2 is bound at residue H65. Residue T68 is modified to Phosphothreonine. Residue H94 coordinates heme b.

The protein belongs to the globin family. As to quaternary structure, monomeric.

The protein localises to the cytoplasm. It is found in the sarcoplasm. The enzyme catalyses Fe(III)-heme b-[protein] + nitric oxide + H2O = Fe(II)-heme b-[protein] + nitrite + 2 H(+). It catalyses the reaction H2O2 + AH2 = A + 2 H2O. In terms of biological role, monomeric heme protein which primary function is to store oxygen and facilitate its diffusion within muscle tissues. Reversibly binds oxygen through a pentacoordinated heme iron and enables its timely and efficient release as needed during periods of heightened demand. Depending on the oxidative conditions of tissues and cells, and in addition to its ability to bind oxygen, it also has a nitrite reductase activity whereby it regulates the production of bioactive nitric oxide. Under stress conditions, like hypoxia and anoxia, it also protects cells against reactive oxygen species thanks to its pseudoperoxidase activity. The polypeptide is Myoglobin (MB) (Spalax ehrenbergi (Middle East blind mole rat)).